A 602-amino-acid polypeptide reads, in one-letter code: DNA mismatch repair protein MutL (602 aa).

The protein belongs to the DNA mismatch repair MutL/HexB family.

Its function is as follows. This protein is involved in the repair of mismatches in DNA. It is required for dam-dependent methyl-directed DNA mismatch repair. May act as a 'molecular matchmaker', a protein that promotes the formation of a stable complex between two or more DNA-binding proteins in an ATP-dependent manner without itself being part of a final effector complex. The protein is DNA mismatch repair protein MutL of Geotalea uraniireducens (strain Rf4) (Geobacter uraniireducens).